We begin with the raw amino-acid sequence, 531 residues long: Developmental and secondary metabolism regulator VE1 (531 aa).

Residues 26–220 (NRSLWYQMTV…ADQGCPVRIR (195 aa)) enclose the Velvet domain. Positions 40–45 (ERARAC) match the Nuclear localization signal motif. Disordered stretches follow at residues 206–435 (LSKT…SQTS) and 447–517 (PVSP…SRAD). Basic and acidic residues predominate over residues 244–253 (FERREEDFGR). Pro residues predominate over residues 295 to 306 (YPPPPPPPPSYE). The segment covering 348–357 (YAPTSQSPYS) has biased composition (polar residues). Residues 381-390 (LKHELYDRRQ) are compositionally biased toward basic and acidic residues. The segment covering 391–405 (STSTYVPPSPSVYST) has biased composition (low complexity). Residues 416–427 (SYPPTPVAAPRP) show a composition bias toward pro residues. A PEST region spans residues 430-461 (MHSQTSLPALKIDQLVSPVSPLPPIEPQTGPA). Over residues 479 to 491 (FAQSTRPLHNGQR) the composition is skewed to polar residues.

This sequence belongs to the velvet family. VeA subfamily. Component of the heterotrimeric velvet complex composed of LAE1, VE1 and VELB; VE1 acting as a bridging protein between LAE1 and VELB. Interacts with VELB and VELC.

Its subcellular location is the nucleus. The protein localises to the cytoplasm. Its function is as follows. Component of the velvet transcription factor complex that controls sexual/asexual developmental ratio in response to light, promoting sexual development in the darkness while stimulating asexual sporulation under illumination. The velvet complex hat acts as a global regulator for secondary metabolite gene expression. Controls the expression of the cycotoxins fumonisins and fusarins gene cluster. Involved in cell wall integrity, cell surface hydrophobicity, hyphal polarity and conidiation pattern. Required for pathogenicity against maize seedlings. Involved in oxidative stress resistance by positively regulating the transcription of the catalase-encoding gene CAT2. The sequence is that of Developmental and secondary metabolism regulator VE1 from Gibberella moniliformis (strain M3125 / FGSC 7600) (Maize ear and stalk rot fungus).